A 406-amino-acid polypeptide reads, in one-letter code: Arginine biosynthesis bifunctional protein ArgJ (406 aa).

Substrate-binding residues include T154, K180, T191, E278, N401, and T406. T191 serves as the catalytic Nucleophile.

Belongs to the ArgJ family. As to quaternary structure, heterotetramer of two alpha and two beta chains.

The protein localises to the cytoplasm. It catalyses the reaction N(2)-acetyl-L-ornithine + L-glutamate = N-acetyl-L-glutamate + L-ornithine. It carries out the reaction L-glutamate + acetyl-CoA = N-acetyl-L-glutamate + CoA + H(+). It functions in the pathway amino-acid biosynthesis; L-arginine biosynthesis; L-ornithine and N-acetyl-L-glutamate from L-glutamate and N(2)-acetyl-L-ornithine (cyclic): step 1/1. Its pathway is amino-acid biosynthesis; L-arginine biosynthesis; N(2)-acetyl-L-ornithine from L-glutamate: step 1/4. Catalyzes two activities which are involved in the cyclic version of arginine biosynthesis: the synthesis of N-acetylglutamate from glutamate and acetyl-CoA as the acetyl donor, and of ornithine by transacetylation between N(2)-acetylornithine and glutamate. The chain is Arginine biosynthesis bifunctional protein ArgJ from Gloeobacter violaceus (strain ATCC 29082 / PCC 7421).